The primary structure comprises 429 residues: SH2 domain-containing protein 5 (429 aa).

Residues 302 to 398 enclose the SH2 domain; it reads WAFAGLSRSC…LSMGRLNPTY (97 aa).

Interacts with BCR. In terms of tissue distribution, highly expressed in brain, particularly in Purkinjie cells in the cerebellum and the cornu ammonis of the hippocampus.

Its subcellular location is the postsynaptic density. In terms of biological role, may be involved in synaptic plasticity regulation through the control of Rac-GTP levels. In Mus musculus (Mouse), this protein is SH2 domain-containing protein 5.